The following is a 346-amino-acid chain: fMet-Leu-Phe receptor (346 aa).

2 N-linked (GlcNAc...) asparagine glycosylation sites follow: Asn-1 and Asn-7. Residues 1–24 are Extracellular-facing; the sequence is NSSLPTNISGGTPAVSAGYLFLDI. A helical membrane pass occupies residues 25 to 47; it reads VTYLVFAVTFVLGVLGNGLVIWV. The Cytoplasmic portion of the chain corresponds to 48–58; that stretch reads AGFRMTHTVTT. The chain crosses the membrane as a helical span at residues 59–80; it reads ISYLNLAVADFCFTSTLPFFMV. Residues 81-97 are Extracellular-facing; it reads KKAMGGHWPFGWFLCKF. Cys-95 and Cys-173 are oxidised to a cystine. A helical transmembrane segment spans residues 98–118; the sequence is IFTIVDINLFGSVFLIALIAL. The Cytoplasmic segment spans residues 119 to 137; sequence DRCVCVLHPVWTQNHRTVS. The chain crosses the membrane as a helical span at residues 138 to 159; the sequence is LAKKVIIGPWVMALLLTLPVII. Topologically, residues 160–202 are extracellular; sequence RVTTVPGKMGTVACTFNFSPWTNDPKERIKVAVAMLTVRGIIR. The helical transmembrane segment at 203-223 threads the bilayer; sequence FIIGFSAPMSIVAVSYGLIAT. Residues 224–239 lie on the Cytoplasmic side of the membrane; that stretch reads KIDKQGLIKSSRTLRV. The helical transmembrane segment at 240 to 263 threads the bilayer; the sequence is LSFVAAAFFLSWSPYQVVALIATV. Over 264-282 the chain is Extracellular; the sequence is RIRELLQGMYKEIGIAVDV. The chain crosses the membrane as a helical span at residues 283 to 302; that stretch reads TSALAFFNSCLNPMLYVFMG. The Cytoplasmic segment spans residues 303–346; it reads QDFRERLIHALPASLERALTEDSTQTSDTATNSTLPSAEVALQA. The segment at 322–346 is disordered; it reads TEDSTQTSDTATNSTLPSAEVALQA. Residues 323-338 are compositionally biased toward polar residues; sequence EDSTQTSDTATNSTLP.

Belongs to the G-protein coupled receptor 1 family. In terms of processing, phosphorylated; which is necessary for desensitization.

It is found in the cell membrane. Its function is as follows. High affinity receptor for N-formyl-methionyl peptides (fMLP), which are powerful neutrophil chemotactic factors. Binding of fMLP to the receptor stimulates intracellular calcium mobilization and superoxide anion release. This response is mediated via a G-protein that activates a phosphatidylinositol-calcium second messenger system. Receptor for TAFA4, mediates its effects on chemoattracting macrophages, promoting phagocytosis and increasing ROS release. Receptor for cathepsin CTSG, leading to increased phagocyte chemotaxis. The chain is fMet-Leu-Phe receptor (FPR1) from Gorilla gorilla gorilla (Western lowland gorilla).